Consider the following 48-residue polypeptide: Small, acid-soluble spore protein N (48 aa).

Residues 1–48 (MGINKKDGQPQYAPSHLGTKPVKYKRNKGEKFHDKSNGHPIVMQTKGE) form a disordered region. Residues 27–37 (NKGEKFHDKSN) are compositionally biased toward basic and acidic residues.

It belongs to the SspN family.

The protein localises to the spore core. In Bacillus velezensis (strain DSM 23117 / BGSC 10A6 / LMG 26770 / FZB42) (Bacillus amyloliquefaciens subsp. plantarum), this protein is Small, acid-soluble spore protein N.